Consider the following 300-residue polypeptide: tRNA dimethylallyltransferase (300 aa).

11–18 lines the ATP pocket; sequence GPTAVGKS. 13-18 contacts substrate; sequence TAVGKS. The tract at residues 35–38 is interaction with substrate tRNA; it reads DSIQ.

It belongs to the IPP transferase family. In terms of assembly, monomer. Mg(2+) is required as a cofactor.

It catalyses the reaction adenosine(37) in tRNA + dimethylallyl diphosphate = N(6)-dimethylallyladenosine(37) in tRNA + diphosphate. Catalyzes the transfer of a dimethylallyl group onto the adenine at position 37 in tRNAs that read codons beginning with uridine, leading to the formation of N6-(dimethylallyl)adenosine (i(6)A). The polypeptide is tRNA dimethylallyltransferase (Borreliella afzelii (strain PKo) (Borrelia afzelii)).